The sequence spans 283 residues: Pantothenate synthetase (283 aa).

30 to 37 lines the ATP pocket; sequence MGYYHAGH. Catalysis depends on H37, which acts as the Proton donor. Residue Q61 coordinates (R)-pantoate. Residue Q61 coordinates beta-alanine. An ATP-binding site is contributed by 147–150; the sequence is GQKD. Q153 provides a ligand contact to (R)-pantoate. ATP contacts are provided by residues V176 and 184–187; that span reads MSSR.

Belongs to the pantothenate synthetase family. Homodimer.

Its subcellular location is the cytoplasm. The catalysed reaction is (R)-pantoate + beta-alanine + ATP = (R)-pantothenate + AMP + diphosphate + H(+). It functions in the pathway cofactor biosynthesis; (R)-pantothenate biosynthesis; (R)-pantothenate from (R)-pantoate and beta-alanine: step 1/1. Catalyzes the condensation of pantoate with beta-alanine in an ATP-dependent reaction via a pantoyl-adenylate intermediate. In Nitratidesulfovibrio vulgaris (strain ATCC 29579 / DSM 644 / CCUG 34227 / NCIMB 8303 / VKM B-1760 / Hildenborough) (Desulfovibrio vulgaris), this protein is Pantothenate synthetase.